A 164-amino-acid polypeptide reads, in one-letter code: SsrA-binding protein (164 aa).

This sequence belongs to the SmpB family.

Its subcellular location is the cytoplasm. In terms of biological role, required for rescue of stalled ribosomes mediated by trans-translation. Binds to transfer-messenger RNA (tmRNA), required for stable association of tmRNA with ribosomes. tmRNA and SmpB together mimic tRNA shape, replacing the anticodon stem-loop with SmpB. tmRNA is encoded by the ssrA gene; the 2 termini fold to resemble tRNA(Ala) and it encodes a 'tag peptide', a short internal open reading frame. During trans-translation Ala-aminoacylated tmRNA acts like a tRNA, entering the A-site of stalled ribosomes, displacing the stalled mRNA. The ribosome then switches to translate the ORF on the tmRNA; the nascent peptide is terminated with the 'tag peptide' encoded by the tmRNA and targeted for degradation. The ribosome is freed to recommence translation, which seems to be the essential function of trans-translation. This is SsrA-binding protein from Shewanella sediminis (strain HAW-EB3).